Consider the following 366-residue polypeptide: GTPase Obg (366 aa).

The 159-residue stretch at 1–159 (MKFLDEAKVY…KTIWLRLKLI (159 aa)) folds into the Obg domain. In terms of domain architecture, OBG-type G spans 160 to 327 (ADAGLVGLPN…VLRALRDVIV (168 aa)). Residues 166–173 (GLPNAGKS), 191–195 (FTTLH), 212–215 (DIPG), 279–282 (SQID), and 308–310 (SAI) contribute to the GTP site. 2 residues coordinate Mg(2+): Ser-173 and Thr-193. Residues 333-366 (DDETISQRPKKHRHKLEDRPQHENGPEESEEGEE) form a disordered region. Basic and acidic residues predominate over residues 347–357 (KLEDRPQHENG).

This sequence belongs to the TRAFAC class OBG-HflX-like GTPase superfamily. OBG GTPase family. Monomer. Mg(2+) is required as a cofactor.

The protein localises to the cytoplasm. Functionally, an essential GTPase which binds GTP, GDP and possibly (p)ppGpp with moderate affinity, with high nucleotide exchange rates and a fairly low GTP hydrolysis rate. Plays a role in control of the cell cycle, stress response, ribosome biogenesis and in those bacteria that undergo differentiation, in morphogenesis control. In Allorhizobium ampelinum (strain ATCC BAA-846 / DSM 112012 / S4) (Agrobacterium vitis (strain S4)), this protein is GTPase Obg.